An 806-amino-acid polypeptide reads, in one-letter code: Phenylalanine--tRNA ligase beta subunit (806 aa).

The region spanning 40 to 153 is the tRNA-binding domain; the sequence is FNSPDYLQLA…ADAIIIDHVS (114 aa). The 75-residue stretch at 413–487 folds into the B5 domain; the sequence is PFSKKLTVNF…KLIDINKLKP (75 aa). Asp465, Asp471, Glu474, and Glu475 together coordinate Mg(2+).

This sequence belongs to the phenylalanyl-tRNA synthetase beta subunit family. Type 1 subfamily. Tetramer of two alpha and two beta subunits. Mg(2+) serves as cofactor.

It is found in the cytoplasm. It catalyses the reaction tRNA(Phe) + L-phenylalanine + ATP = L-phenylalanyl-tRNA(Phe) + AMP + diphosphate + H(+). This Mycoplasma genitalium (strain ATCC 33530 / DSM 19775 / NCTC 10195 / G37) (Mycoplasmoides genitalium) protein is Phenylalanine--tRNA ligase beta subunit (pheT).